Reading from the N-terminus, the 209-residue chain is Probable transcriptional regulator ycf29 (209 aa).

Residues N4–I120 form the Response regulatory domain. The residue at position 53 (D53) is a 4-aspartylphosphate. The HTH luxR-type domain occupies P139 to N204.

Its subcellular location is the plastid. The protein localises to the chloroplast. The protein is Probable transcriptional regulator ycf29 (ycf29) of Porphyra purpurea (Red seaweed).